The primary structure comprises 103 residues: Large ribosomal subunit protein uL24 (103 aa).

The protein belongs to the universal ribosomal protein uL24 family. As to quaternary structure, part of the 50S ribosomal subunit.

Its function is as follows. One of two assembly initiator proteins, it binds directly to the 5'-end of the 23S rRNA, where it nucleates assembly of the 50S subunit. In terms of biological role, one of the proteins that surrounds the polypeptide exit tunnel on the outside of the subunit. This chain is Large ribosomal subunit protein uL24, found in Histophilus somni (strain 129Pt) (Haemophilus somnus).